The sequence spans 196 residues: ATP-dependent Clp protease proteolytic subunit 1 (196 aa).

The active-site Nucleophile is Ser96. Residue His121 is part of the active site.

The protein belongs to the peptidase S14 family. In terms of assembly, fourteen ClpP subunits assemble into 2 heptameric rings which stack back to back to give a disk-like structure with a central cavity, resembling the structure of eukaryotic proteasomes.

It localises to the cytoplasm. The enzyme catalyses Hydrolysis of proteins to small peptides in the presence of ATP and magnesium. alpha-casein is the usual test substrate. In the absence of ATP, only oligopeptides shorter than five residues are hydrolyzed (such as succinyl-Leu-Tyr-|-NHMec, and Leu-Tyr-Leu-|-Tyr-Trp, in which cleavage of the -Tyr-|-Leu- and -Tyr-|-Trp bonds also occurs).. Functionally, cleaves peptides in various proteins in a process that requires ATP hydrolysis. Has a chymotrypsin-like activity. Plays a major role in the degradation of misfolded proteins. This Prochlorococcus marinus (strain SARG / CCMP1375 / SS120) protein is ATP-dependent Clp protease proteolytic subunit 1.